The primary structure comprises 20 residues: Cytotoxin drCT-1 (20 aa).

The protein belongs to the three-finger toxin family. Short-chain subfamily. Type IA cytotoxin sub-subfamily. Monomer in solution; Homodimer and oligomer in the presence of negatively charged lipids forming a pore with a size ranging between 20 and 30 Angstroms. As to expression, expressed by the venom gland.

Its subcellular location is the secreted. The protein localises to the target cell membrane. Its function is as follows. This three-finger cytotoxin has antiproliferative, cytotoxic and apoptotic activities. Both in vivo and in vitro experimental results suggests that this protein possess anticancer potential. Also shows neurotoxicity, cardiotoxicity and myotoxicity. The sequence is that of Cytotoxin drCT-1 from Daboia russelii (Russel's viper).